The chain runs to 333 residues: Ketol-acid reductoisomerase (NADP(+)) (333 aa).

Positions 2–182 constitute a KARI N-terminal Rossmann domain; sequence AKLYYEKDCN…GGARAGVLKT (181 aa). NADP(+) contacts are provided by residues 25 to 28, Ser-51, Ser-53, and 83 to 86; these read YGSQ and DEKQ. His-108 is an active-site residue. Residue Gly-134 coordinates NADP(+). One can recognise a KARI C-terminal knotted domain in the interval 183 to 328; that stretch reads TFKEETETDL…KELRDMMSWS (146 aa). Residues Asp-191, Glu-195, Glu-227, and Glu-231 each contribute to the Mg(2+) site. Substrate is bound at residue Ser-252.

The protein belongs to the ketol-acid reductoisomerase family. Mg(2+) serves as cofactor.

The catalysed reaction is (2R)-2,3-dihydroxy-3-methylbutanoate + NADP(+) = (2S)-2-acetolactate + NADPH + H(+). The enzyme catalyses (2R,3R)-2,3-dihydroxy-3-methylpentanoate + NADP(+) = (S)-2-ethyl-2-hydroxy-3-oxobutanoate + NADPH + H(+). It participates in amino-acid biosynthesis; L-isoleucine biosynthesis; L-isoleucine from 2-oxobutanoate: step 2/4. Its pathway is amino-acid biosynthesis; L-valine biosynthesis; L-valine from pyruvate: step 2/4. In terms of biological role, involved in the biosynthesis of branched-chain amino acids (BCAA). Catalyzes an alkyl-migration followed by a ketol-acid reduction of (S)-2-acetolactate (S2AL) to yield (R)-2,3-dihydroxy-isovalerate. In the isomerase reaction, S2AL is rearranged via a Mg-dependent methyl migration to produce 3-hydroxy-3-methyl-2-ketobutyrate (HMKB). In the reductase reaction, this 2-ketoacid undergoes a metal-dependent reduction by NADPH to yield (R)-2,3-dihydroxy-isovalerate. This chain is Ketol-acid reductoisomerase (NADP(+)), found in Alkaliphilus metalliredigens (strain QYMF).